We begin with the raw amino-acid sequence, 376 residues long: N-acetyldiaminopimelate deacetylase (376 aa).

The active site involves Asp69. The Proton acceptor role is filled by Glu128.

Belongs to the peptidase M20A family. N-acetyldiaminopimelate deacetylase subfamily.

It carries out the reaction N-acetyl-(2S,6S)-2,6-diaminopimelate + H2O = (2S,6S)-2,6-diaminopimelate + acetate. The protein operates within amino-acid biosynthesis; L-lysine biosynthesis via DAP pathway; LL-2,6-diaminopimelate from (S)-tetrahydrodipicolinate (acetylase route): step 3/3. Its function is as follows. Catalyzes the conversion of N-acetyl-diaminopimelate to diaminopimelate and acetate. The sequence is that of N-acetyldiaminopimelate deacetylase from Bacillus mycoides (strain KBAB4) (Bacillus weihenstephanensis).